The following is a 75-amino-acid chain: Acyl carrier protein (75 aa).

One can recognise a Carrier domain in the interval 1–75 (MIFEKVRDII…DVVEYLSNLE (75 aa)). Serine 35 carries the O-(pantetheine 4'-phosphoryl)serine modification.

Belongs to the acyl carrier protein (ACP) family. Post-translationally, 4'-phosphopantetheine is transferred from CoA to a specific serine of apo-ACP by AcpS. This modification is essential for activity because fatty acids are bound in thioester linkage to the sulfhydryl of the prosthetic group.

It is found in the cytoplasm. The protein operates within lipid metabolism; fatty acid biosynthesis. In terms of biological role, carrier of the growing fatty acid chain in fatty acid biosynthesis. This Thermoanaerobacter pseudethanolicus (strain ATCC 33223 / 39E) (Clostridium thermohydrosulfuricum) protein is Acyl carrier protein.